The chain runs to 333 residues: Phosphate acyltransferase (333 aa).

It belongs to the PlsX family. Homodimer. Probably interacts with PlsY.

It localises to the cytoplasm. The enzyme catalyses a fatty acyl-[ACP] + phosphate = an acyl phosphate + holo-[ACP]. It participates in lipid metabolism; phospholipid metabolism. Its function is as follows. Catalyzes the reversible formation of acyl-phosphate (acyl-PO(4)) from acyl-[acyl-carrier-protein] (acyl-ACP). This enzyme utilizes acyl-ACP as fatty acyl donor, but not acyl-CoA. The sequence is that of Phosphate acyltransferase from Cellvibrio japonicus (strain Ueda107) (Pseudomonas fluorescens subsp. cellulosa).